An 83-amino-acid polypeptide reads, in one-letter code: Putative membrane protein insertion efficiency factor (83 aa).

The protein belongs to the UPF0161 family.

Its subcellular location is the cell membrane. Could be involved in insertion of integral membrane proteins into the membrane. The protein is Putative membrane protein insertion efficiency factor of Streptococcus thermophilus (strain ATCC BAA-250 / LMG 18311).